The sequence spans 209 residues: Uracil phosphoribosyltransferase (209 aa).

Residues Arg-79, Arg-104, and 131 to 139 contribute to the 5-phospho-alpha-D-ribose 1-diphosphate site; that span reads DPMLATGGS. Residues Ile-194 and 199 to 201 each bind uracil; that span reads GDA. Asp-200 contributes to the 5-phospho-alpha-D-ribose 1-diphosphate binding site.

The protein belongs to the UPRTase family. Mg(2+) is required as a cofactor.

The catalysed reaction is UMP + diphosphate = 5-phospho-alpha-D-ribose 1-diphosphate + uracil. Its pathway is pyrimidine metabolism; UMP biosynthesis via salvage pathway; UMP from uracil: step 1/1. With respect to regulation, allosterically activated by GTP. Its function is as follows. Catalyzes the conversion of uracil and 5-phospho-alpha-D-ribose 1-diphosphate (PRPP) to UMP and diphosphate. The polypeptide is Uracil phosphoribosyltransferase (Enterococcus faecalis (strain ATCC 700802 / V583)).